We begin with the raw amino-acid sequence, 959 residues long: Isoleucine--tRNA ligase (959 aa).

A 'HIGH' region motif is present at residues 60–70; that stretch reads PYANGSLHMGH. Residue glutamate 569 coordinates L-isoleucyl-5'-AMP. The 'KMSKS' region motif lies at 610–614; that stretch reads KMSKS. Lysine 613 lines the ATP pocket. Zn(2+) is bound by residues cysteine 928, cysteine 931, cysteine 948, and cysteine 951.

Belongs to the class-I aminoacyl-tRNA synthetase family. IleS type 1 subfamily. Monomer. Zn(2+) serves as cofactor.

It localises to the cytoplasm. It carries out the reaction tRNA(Ile) + L-isoleucine + ATP = L-isoleucyl-tRNA(Ile) + AMP + diphosphate. Its function is as follows. Catalyzes the attachment of isoleucine to tRNA(Ile). As IleRS can inadvertently accommodate and process structurally similar amino acids such as valine, to avoid such errors it has two additional distinct tRNA(Ile)-dependent editing activities. One activity is designated as 'pretransfer' editing and involves the hydrolysis of activated Val-AMP. The other activity is designated 'posttransfer' editing and involves deacylation of mischarged Val-tRNA(Ile). In Gloeothece citriformis (strain PCC 7424) (Cyanothece sp. (strain PCC 7424)), this protein is Isoleucine--tRNA ligase.